The chain runs to 1549 residues: Trichohyalin (1549 aa).

The interval 1-91 (MSPLLRSIFN…AAACYYALGQ (91 aa)) is S-100-like. 2 EF-hand domains span residues 23-48 (CDGTTLSKKDLKNLLEREFGEILRKP) and 49-84 (HDPETVDLVLELQDRDRDGLIDFHEFLAIVFKVAAA). Residues Thr27, Asp32, Asp62, Asp64, Asp66, and Glu73 each contribute to the Ca(2+) site. Disordered stretches follow at residues 97 to 125 (EKEAKCERKGNPLQDRRREDQRRFEPQDR), 157 to 180 (LQRREQEEYGGEEELQQRPKGREL), 262 to 359 (LRRK…KQEQ), and 404 to 448 (QREK…RQER). 3 stretches are compositionally biased toward basic and acidic residues: residues 171-180 (LQQRPKGREL), 262-278 (LRRKEQERREQQLRQEQ), and 317-335 (HRQEQQSRRQEQELLERQQ). Over residues 336-348 (EQQISEEVQSLQE) the composition is skewed to low complexity. Residues 349–359 (DQGRQRLKQEQ) are compositionally biased toward basic and acidic residues. Repeat copies occupy residues 413-448 (ERQYREVELQREEERLQREEEQLQREEREKRRRQER), 449-476 (EKQYLEKVELWEEEQLQREEREKRRQER), 477-504 (EKQYLEKVELREEEQLQRQEREKRRQER), 505-532 (ERQYLEKVELQEEEQLQREEREKRRQER), 533-560 (ERQYLEKVELQEEEQLQRQEREKRRQER), 561-588 (EKQYLEKVELQEEEQLQRQERQKRRQER), 589-616 (EKQYLEKVELQEEEQLQRQEREKRRQER), 617-644 (ERQYLEKVELQEEEQVQRQEREKRRQER), 645-678 (ERQYLEKELQRQEERLQEEEQLLREEREKRRQER), 679-706 (ERQYLEKVELQEEEQLQREEREKRRQER), 707-742 (ERQYLEKEELQRQEERLQREKEQLQREDREKRRQVR), 743-771 (ERKYLEEELQQEEDRLQREKQLLREDREK), 772-796 (RQYLEKVELQREEEQLQREKRRQER), and 797-832 (ERQYREEELLREEERLHRKEQQLQREECEKRRRQEL). Residues 413–832 (ERQYREVELQ…ECEKRRRQEL (420 aa)) are 14 X 28 AA approximate tandem repeats. 3 disordered regions span residues 782–803 (REEEQLQREKRRQERERQYREE), 839–942 (EELQ…RKFR), and 980–1000 (QLRQERDRKFREELSRQERDR). 3 stretches are compositionally biased toward basic and acidic residues: residues 850–884 (FRDDDQHQNEVRNSRVYSKHRENKEKSRQLDDSWV), 895–918 (PLQDEQEEKREREQEWRSRQKRDS), and 925–942 (LLEREQQKETERRDRKFR). 23 tandem repeats follow at residues 938 to 961 (DRKFREEEQLLKGQREEKIRYLEE), 962 to 985 (DRKFREEEQQLRRLEREQQLRQER), 986 to 1021 (DRKFREELSRQERDRKFREEEQLLQEREEQLRRQER), 1022 to 1044 (DRKFREEEQLLQEREEQLRRQER), 1045 to 1067 (DRKFREEEQLLQEREEQLRRQER), 1068 to 1090 (DRKFREEEQQLRLLEREQQLRQE), 1091 to 1121 (RNRKFREEQLLREREEQLRLQEGEPQLRQKR), 1122 to 1144 (DRKFHEEEQLLQEREEQLRRQER), 1145 to 1167 (DRKFREEAQILKEREEQLRRQER), 1168 to 1197 (DRKFREEEQLLQEREELRRQEREPQLRQER), 1198 to 1227 (DRKFREEEQLLQEREKLRRQEREPQLRQER), 1228 to 1250 (DRKFHEEEQLLQEREEQLRRQER), 1251 to 1273 (DRKFREEAQLLQEREEQLRRQER), 1274 to 1296 (DRKFREEEQLLQEREEQLRRQER), 1297 to 1319 (DRKFREEEQLLQEREEQLRRQER), 1320 to 1342 (DRKFREEEQLLKESEEQLRRQER), 1343 to 1368 (DRKFHEKEHLLREREEQQLRRQELEG), 1369 to 1391 (VFSQEEQLRRAEQEEEQRRQRQR), 1392 to 1416 (DRKFLEEEQSLQREREEEKRRVQEQ), 1417 to 1439 (DRKFLEQEEQLHREEQEELRRRQ), 1440 to 1461 (QLDQQYRAEEQFAREEKRRRQE), 1462 to 1484 (QELRQEEQRRRQERERKFREEEQ), and 1485 to 1507 (LRRQQQEEQKRRQERDVQQSRRQ). Residues 938-1507 (DRKFREEEQL…ERDVQQSRRQ (570 aa)) are 23 X 23 AA approximate tandem repeats. Basic and acidic residues predominate over residues 1489–1523 (QQEEQKRRQERDVQQSRRQVWEEDKGRRQVLEAGK). The interval 1489-1549 (QQEEQKRRQE…IQEQRSQYRP (61 aa)) is disordered.

It belongs to the S100-fused protein family. Homodimer. Post-translationally, substrate of transglutaminase. Some 200 arginines are probably converted to citrullines by peptidylarginine deimidase. In terms of tissue distribution, found in the hard keratinizing tissues such as the inner root sheath (IRS) of hair follicles and medulla, and in the epithelia of the tongue, hoof and rumen.

Its function is as follows. Intermediate filament-associated protein that associates in regular arrays with keratin intermediate filaments (KIF) of the inner root sheath cells of the hair follicle and the granular layer of the epidermis. It later becomes cross-linked to KIF by isodipeptide bonds. It may serve as scaffold protein, together with involucrin, in the organization of the cell envelope or even anchor the cell envelope to the KIF network. It may be involved in its own calcium-dependent postsynthetic processing during terminal differentiation. In Ovis aries (Sheep), this protein is Trichohyalin (TCHH).